Consider the following 140-residue polypeptide: Actin-depolymerizing factor 10 (140 aa).

Position 6 is a phosphoserine (Ser-6). Residues 7-139 form the ADF-H domain; that stretch reads GMHVSDECKL…SLDIIKGRVN (133 aa).

Belongs to the actin-binding proteins ADF family.

It is found in the cytoplasm. It localises to the cytoskeleton. Functionally, actin-depolymerizing protein. Severs actin filaments (F-actin) and binds to actin monomers. This is Actin-depolymerizing factor 10 (ADF10) from Arabidopsis thaliana (Mouse-ear cress).